The chain runs to 551 residues: Methyl-accepting chemotaxis protein I (551 aa).

Residues 1–6 (MLKRIK) lie on the Cytoplasmic side of the membrane. The helical transmembrane segment at 7–30 (IVTSLLLVLAVFGLLQLTSGGLFF) threads the bilayer. At 31-190 (NALKNDKENF…AVSDNNASYS (160 aa)) the chain is on the periplasmic side. The tract at residues 64-73 (RNTLNRAGIR) is the 3 Arg may form a positively charged pocket, which binds the alpha-carboxyl group of the attractant AA. A helical transmembrane segment spans residues 191-210 (QAMWILVGVMIVVLAVIFAV). Residues 211–551 (WFGIKASLVA…ADSEENWETF (341 aa)) are Cytoplasmic-facing. In terms of domain architecture, HAMP spans 216–268 (ASLVAPMNRLIDSIRHIAGGDLVKPIEVDGSNEMGQLAESLRHMQGELMRTVG). Positions 273-502 (GANAIYSGAS…ESAAAAAALE (230 aa)) constitute a Methyl-accepting transducer domain. Gln-297 is modified (glutamate methyl ester (Gln)). Residue Glu-304 is modified to Glutamate methyl ester (Glu). Glutamate methyl ester (Gln) is present on Gln-311. A glutamate methyl ester (Glu) mark is found at Glu-493 and Glu-502.

Belongs to the methyl-accepting chemotaxis (MCP) protein family.

It localises to the cell inner membrane. In terms of biological role, receptor for the attractant L-serine and related amino acids. Is also responsible for chemotaxis away from a wide range of repellents, including leucine, indole, and weak acids. Chemotactic-signal transducers respond to changes in the concentration of attractants and repellents in the environment, transduce a signal from the outside to the inside of the cell, and facilitate sensory adaptation through the variation of the level of methylation. Attractants increase the level of methylation while repellents decrease the level of methylation, the methyl groups are added by the methyltransferase CheR and removed by the methylesterase CheB. The chain is Methyl-accepting chemotaxis protein I (tsr) from Escherichia coli (strain K12).